A 335-amino-acid polypeptide reads, in one-letter code: Ketol-acid reductoisomerase (NADP(+)) (335 aa).

A KARI N-terminal Rossmann domain is found at 1–182 (MATIIYDDET…GATRAGVYET (182 aa)). NADP(+) is bound by residues 25-28 (YGSQ), Arg-48, Ser-51, Ser-53, and 83-86 (DEKQ). Residue His-108 is part of the active site. Position 134 (Gly-134) interacts with NADP(+). A KARI C-terminal knotted domain is found at 183–328 (TFREETETDL…KQIRANIPWL (146 aa)). Residues Asp-191, Glu-195, Glu-227, and Glu-231 each coordinate Mg(2+). Ser-252 is a binding site for substrate.

The protein belongs to the ketol-acid reductoisomerase family. Mg(2+) serves as cofactor.

It catalyses the reaction (2R)-2,3-dihydroxy-3-methylbutanoate + NADP(+) = (2S)-2-acetolactate + NADPH + H(+). The enzyme catalyses (2R,3R)-2,3-dihydroxy-3-methylpentanoate + NADP(+) = (S)-2-ethyl-2-hydroxy-3-oxobutanoate + NADPH + H(+). Its pathway is amino-acid biosynthesis; L-isoleucine biosynthesis; L-isoleucine from 2-oxobutanoate: step 2/4. It participates in amino-acid biosynthesis; L-valine biosynthesis; L-valine from pyruvate: step 2/4. Its function is as follows. Involved in the biosynthesis of branched-chain amino acids (BCAA). Catalyzes an alkyl-migration followed by a ketol-acid reduction of (S)-2-acetolactate (S2AL) to yield (R)-2,3-dihydroxy-isovalerate. In the isomerase reaction, S2AL is rearranged via a Mg-dependent methyl migration to produce 3-hydroxy-3-methyl-2-ketobutyrate (HMKB). In the reductase reaction, this 2-ketoacid undergoes a metal-dependent reduction by NADPH to yield (R)-2,3-dihydroxy-isovalerate. This Methanosarcina mazei (strain ATCC BAA-159 / DSM 3647 / Goe1 / Go1 / JCM 11833 / OCM 88) (Methanosarcina frisia) protein is Ketol-acid reductoisomerase (NADP(+)).